The following is a 262-amino-acid chain: Thiamine thiazole synthase (262 aa).

NAD(+) is bound by residues A36, 55 to 56, G63, V127, and 154 to 156; these read EK and HVD. Residues D156 and H171 each coordinate Fe cation. M224 contributes to the NAD(+) binding site. Residue R234 participates in glycine binding.

Belongs to the THI4 family. As to quaternary structure, homooctamer; tetramer of dimers. The cofactor is Fe(2+).

It carries out the reaction hydrogen sulfide + glycine + NAD(+) = ADP-5-ethyl-4-methylthiazole-2-carboxylate + nicotinamide + 3 H2O + H(+). It functions in the pathway cofactor biosynthesis; thiamine diphosphate biosynthesis. Involved in the biosynthesis of the thiazole moiety of thiamine. Catalyzes the conversion of NAD and glycine to adenosine diphosphate 5-(2-hydroxyethyl)-4-methylthiazole-2-carboxylate (ADT), an adenylated thiazole intermediate, using free sulfide as a source of sulfur. The protein is Thiamine thiazole synthase of Methanothrix thermoacetophila (strain DSM 6194 / JCM 14653 / NBRC 101360 / PT) (Methanosaeta thermophila).